A 64-amino-acid polypeptide reads, in one-letter code: Beta-defensin 1 (64 aa).

Positions 1 to 20 (MRLHRLLLVFLLMVLLPVPG) are cleaved as a signal peptide. Positions 21-23 (LLK) are excised as a propeptide. Disulfide bonds link C31–C60, C38–C53, and C43–C61.

It belongs to the beta-defensin family. Monomer. Homodimer.

Its subcellular location is the secreted. The protein localises to the membrane. Its function is as follows. Has bactericidal activity. May act as a ligand for C-C chemokine receptor CCR6. Positively regulates the sperm motility and bactericidal activity in a CCR6-dependent manner. Binds to CCR6 and triggers Ca2+ mobilization in the sperm which is important for its motility. The polypeptide is Beta-defensin 1 (DEFB1) (Sus scrofa (Pig)).